Here is an 89-residue protein sequence, read N- to C-terminus: Small ribosomal subunit protein uS14 (89 aa).

Belongs to the universal ribosomal protein uS14 family. In terms of assembly, part of the 30S ribosomal subunit. Contacts proteins S3 and S10.

Its function is as follows. Binds 16S rRNA, required for the assembly of 30S particles and may also be responsible for determining the conformation of the 16S rRNA at the A site. This is Small ribosomal subunit protein uS14 from Chlorobaculum parvum (strain DSM 263 / NCIMB 8327) (Chlorobium vibrioforme subsp. thiosulfatophilum).